A 477-amino-acid polypeptide reads, in one-letter code: Glutamate--tRNA ligase (477 aa).

Positions 8–18 (PSPTGTLHIGT) match the 'HIGH' region motif. The 'KMSKS' region signature appears at 247–251 (KLSKR). Lys250 lines the ATP pocket.

This sequence belongs to the class-I aminoacyl-tRNA synthetase family. Glutamate--tRNA ligase type 1 subfamily. Monomer.

It is found in the cytoplasm. It carries out the reaction tRNA(Glu) + L-glutamate + ATP = L-glutamyl-tRNA(Glu) + AMP + diphosphate. Catalyzes the attachment of glutamate to tRNA(Glu) in a two-step reaction: glutamate is first activated by ATP to form Glu-AMP and then transferred to the acceptor end of tRNA(Glu). In Synechococcus sp. (strain CC9605), this protein is Glutamate--tRNA ligase.